Here is a 206-residue protein sequence, read N- to C-terminus: MKGKFIVFEGNDGSGKSTQILKVEKYLKEKGYKVVTTREPGGTEVGFRIRKLLLDPAYKMDGLTEALLLAADRNEHVKNVLIPALEDGYVVVCDRYILSSIVYQGIVRGVGVENIIKLNSIFEEKIKPDLYIILTLSPEIALQRLKMAGKNDKLDTENFDFHRKVYNGFKEVSKMFKKCVNIEAEGTVEDVFEKVRKVIDDLLKKR.

10–17 provides a ligand contact to ATP; sequence GNDGSGKS.

It belongs to the thymidylate kinase family.

The catalysed reaction is dTMP + ATP = dTDP + ADP. In terms of biological role, phosphorylation of dTMP to form dTDP in both de novo and salvage pathways of dTTP synthesis. The polypeptide is Thymidylate kinase (Caldicellulosiruptor saccharolyticus (strain ATCC 43494 / DSM 8903 / Tp8T 6331)).